The primary structure comprises 223 residues: MPTALPDHFFHRDAQVLARDLLGKVIRHKAGDLWLAARIIETEAYYCAEKGSHASLGYTEKRKALFLDGGHIYMYYARGGDSLNFSAEGPGNAVLIKSAFAWTDATSDENALAQMQLNNPDASGAMRPAQRLCAGQTLLCKALGLKVPVWDAKRFDPQKLLVEDVGQTPERIIQTTRLGIPAGRDEHLMYRFVDAGYARFCTRNPLRRGQVEGRDYLFLDQGN.

The protein belongs to the DNA glycosylase MPG family.

This Pseudomonas syringae pv. syringae (strain B728a) protein is Putative 3-methyladenine DNA glycosylase.